Reading from the N-terminus, the 563-residue chain is Endogenous retroviral envelope protein HEMO (563 aa).

A signal peptide spans 1-26; the sequence is MGSLSNYALLQLTLTAFLTILVQPQH. Residues 27–488 lie on the Extracellular side of the membrane; it reads LLAPVFRTLS…IFAKVGDWFR (462 aa). N-linked (GlcNAc...) asparagine glycosylation is found at N122 and N192. A helical transmembrane segment spans residues 489–509; sequence SWGYVLLIVLFCLFIFVLIYV. Residues 510–563 are Cytoplasmic-facing; it reads RVFRKSRRSLNSQPLNLALSPQQSAQLLVSETSCQVSNRAMKGLTTHQYDTSLL.

It belongs to the gamma type-C retroviral envelope protein family. In terms of processing, N-glycosylated. Post-translationally, cleaved by some metalloproteinase at 432-Gln-Arg-433 (mainly) or 433-Arg-Gln-434, leading to release the secreted form (Endogenous retroviral envelope protein HEMO, secreted form) in the extracellular medium. Expressed at high level in the placenta and stem cells (at protein level). Also expressed in the kidney but at a lower level. Endogenous retroviral envelope protein HEMO, secreted form: Present in the blood of pregnant women (at protein level).

The protein resides in the cell membrane. It is found in the secreted. Functionally, endogenous envelope proteins originate from retroviral envelope proteins, which mediate receptor recognition and membrane fusion during early infection. Endogenous envelope proteins may have kept, lost or modified their original function during evolution. The protein is Endogenous retroviral envelope protein HEMO of Homo sapiens (Human).